The chain runs to 332 residues: 2,3-diketo-L-gulonate reductase (332 aa).

Residue H44 is the Proton donor of the active site. NAD(+) contacts are provided by residues 168–174, 224–225, and 304–306; these read ITMVDMS, WK, and GHE.

This sequence belongs to the LDH2/MDH2 oxidoreductase family. DlgD subfamily. Homodimer.

Its subcellular location is the cytoplasm. The enzyme catalyses 3-dehydro-L-gulonate + NAD(+) = 2,3-dioxo-L-gulonate + NADH + H(+). It carries out the reaction 3-dehydro-L-gulonate + NADP(+) = 2,3-dioxo-L-gulonate + NADPH + H(+). Its function is as follows. Catalyzes the reduction of 2,3-diketo-L-gulonate in the presence of NADH, to form 3-keto-L-gulonate. The protein is 2,3-diketo-L-gulonate reductase of Salmonella typhi.